Reading from the N-terminus, the 388-residue chain is F-box/LRR-repeat protein At3g59190 (388 aa).

An F-box domain is found at 11 to 64 (KDIISNLPDALLCHVLSFLPTTEAASTSVLAKRWRFLLAFVPNLDLDNMIYDRP). LRR repeat units follow at residues 151 to 177 (KVSG…HLSA), 180 to 205 (FGDE…VMIK), 228 to 252 (CENI…EFTD), 313 to 345 (TMYL…TVET), and 346 to 371 (DERV…IFEV).

In Arabidopsis thaliana (Mouse-ear cress), this protein is F-box/LRR-repeat protein At3g59190.